Consider the following 75-residue polypeptide: Defensin-like protein 59 (75 aa).

Residues 1–19 form the signal peptide; the sequence is MNITKSYVVIFFLVMLTNS. Disulfide bonds link cysteine 39–cysteine 73, cysteine 43–cysteine 66, cysteine 52–cysteine 71, and cysteine 56–cysteine 72.

It belongs to the DEFL family.

The protein localises to the secreted. This is Defensin-like protein 59 from Arabidopsis thaliana (Mouse-ear cress).